The sequence spans 155 residues: uncharacterized protein (155 aa).

Disordered stretches follow at residues 1–22 (MSSQKGNVTRSRPQKHQNTFTF) and 108–155 (PFNK…DTQA). S2 carries the post-translational modification N-acetylserine. S136, S144, and S146 each carry phosphoserine. Over residues 136 to 155 (SDEDLDAESDSEGEDEDTQA) the composition is skewed to acidic residues.

This is an uncharacterized protein from Rattus norvegicus (Rat).